Consider the following 440-residue polypeptide: Ribulose bisphosphate carboxylase large chain (440 aa).

Position 4 is an N6,N6,N6-trimethyllysine (K4). N113 and T163 together coordinate substrate. Catalysis depends on K165, which acts as the Proton acceptor. K167 is a substrate binding site. 3 residues coordinate Mg(2+): K191, D193, and E194. At K191 the chain carries N6-carboxylysine. The active-site Proton acceptor is H284. Residues R285, H317, and S369 each contribute to the substrate site.

Belongs to the RuBisCO large chain family. Type I subfamily. In terms of assembly, heterohexadecamer of 8 large chains and 8 small chains; disulfide-linked. The disulfide link is formed within the large subunit homodimers. The cofactor is Mg(2+). In terms of processing, the disulfide bond which can form in the large chain dimeric partners within the hexadecamer appears to be associated with oxidative stress and protein turnover.

It is found in the plastid. The protein localises to the chloroplast. It catalyses the reaction 2 (2R)-3-phosphoglycerate + 2 H(+) = D-ribulose 1,5-bisphosphate + CO2 + H2O. It carries out the reaction D-ribulose 1,5-bisphosphate + O2 = 2-phosphoglycolate + (2R)-3-phosphoglycerate + 2 H(+). Functionally, ruBisCO catalyzes two reactions: the carboxylation of D-ribulose 1,5-bisphosphate, the primary event in carbon dioxide fixation, as well as the oxidative fragmentation of the pentose substrate in the photorespiration process. Both reactions occur simultaneously and in competition at the same active site. The sequence is that of Ribulose bisphosphate carboxylase large chain from Pteris vittata (Chinese ladder brake).